The sequence spans 391 residues: Probable sugar efflux transporter (391 aa).

Transmembrane regions (helical) follow at residues 16 to 36 (VFVF…PIAL), 51 to 71 (VGLM…PLML), 82 to 102 (LLFL…AWDF), 103 to 123 (WVLL…WSIT), 138 to 158 (QALG…LPLG), 170 to 190 (TFGM…RLLP), 210 to 230 (PLLV…FTTY), 247 to 267 (VATL…FLFG), 277 to 297 (FIAC…SFKH), 300 to 320 (WVIF…GISL), 338 to 358 (IFSG…SIVI), and 361 to 381 (LGLG…LFWF).

This sequence belongs to the major facilitator superfamily. SotB (TC 2.A.1.2) family.

It is found in the cell inner membrane. In terms of biological role, involved in the efflux of sugars. The physiological role may be the reduction of the intracellular concentration of toxic sugars or sugar metabolites. The polypeptide is Probable sugar efflux transporter (Helicobacter acinonychis (strain Sheeba)).